The following is a 189-amino-acid chain: Peptidyl-tRNA hydrolase (189 aa).

Tyr-14 lines the tRNA pocket. Catalysis depends on His-19, which acts as the Proton acceptor. Residues Tyr-64, Asn-66, and Asn-112 each contribute to the tRNA site.

The protein belongs to the PTH family. As to quaternary structure, monomer.

The protein resides in the cytoplasm. The enzyme catalyses an N-acyl-L-alpha-aminoacyl-tRNA + H2O = an N-acyl-L-amino acid + a tRNA + H(+). Its function is as follows. Hydrolyzes ribosome-free peptidyl-tRNAs (with 1 or more amino acids incorporated), which drop off the ribosome during protein synthesis, or as a result of ribosome stalling. Catalyzes the release of premature peptidyl moieties from peptidyl-tRNA molecules trapped in stalled 50S ribosomal subunits, and thus maintains levels of free tRNAs and 50S ribosomes. The polypeptide is Peptidyl-tRNA hydrolase (Clostridium botulinum (strain Okra / Type B1)).